The chain runs to 108 residues: Large ribosomal subunit protein uL23 (108 aa).

Belongs to the universal ribosomal protein uL23 family. In terms of assembly, part of the 50S ribosomal subunit. Contacts protein L29, and trigger factor when it is bound to the ribosome.

Functionally, one of the early assembly proteins it binds 23S rRNA. One of the proteins that surrounds the polypeptide exit tunnel on the outside of the ribosome. Forms the main docking site for trigger factor binding to the ribosome. The sequence is that of Large ribosomal subunit protein uL23 from Albidiferax ferrireducens (strain ATCC BAA-621 / DSM 15236 / T118) (Rhodoferax ferrireducens).